The sequence spans 378 residues: MKILVDENMPYARDLFSRLGEVTAVPGRPIPVAQLADADALMVRSVTKVNESLLAGKPIKFVGTATAGTDHVDEAWLKQAGIGFSAAPGCNAIAVVEYVFSSLLMLAERDGFSLHDRTVGIVGVGNVGRRLQARLEALGIKTLLCDPPRADRGDEGDFRSLDELVQHADILTFHTPLFKDGPYKTLHLADEKLIRSLKPGAILINACRGAVVDNTALLTCLNEGQKLSVVLDVWEGEPELNVELLKKVDIGTPHIAGYTLEGKARGTTQVFEAYSKFIGHEQHVALDTLLPATEFGRITLHGPLDQPTLKRLVHLVYDVRRDDAPLRKVAGIPGEFDKLRKNYLERREWSSLYVICDDASAASLLCKLGFNAVHHPAR.

Ser45 and Thr66 together coordinate substrate. The NAD(+) site is built by Asp146 and Thr175. Residue Arg208 is part of the active site. Residue Asp232 coordinates NAD(+). Residue Glu237 is part of the active site. His254 functions as the Proton donor in the catalytic mechanism. Position 257 (Gly257) interacts with NAD(+). Tyr258 is a substrate binding site.

The protein belongs to the D-isomer specific 2-hydroxyacid dehydrogenase family. PdxB subfamily. As to quaternary structure, homodimer.

The protein localises to the cytoplasm. It carries out the reaction 4-phospho-D-erythronate + NAD(+) = (R)-3-hydroxy-2-oxo-4-phosphooxybutanoate + NADH + H(+). Its pathway is cofactor biosynthesis; pyridoxine 5'-phosphate biosynthesis; pyridoxine 5'-phosphate from D-erythrose 4-phosphate: step 2/5. Its function is as follows. Catalyzes the oxidation of erythronate-4-phosphate to 3-hydroxy-2-oxo-4-phosphonooxybutanoate. In Escherichia coli O127:H6 (strain E2348/69 / EPEC), this protein is Erythronate-4-phosphate dehydrogenase.